The primary structure comprises 533 residues: MATSFRTASCWGLLSFKDISMEFTWDEWQLLDSTQKYLYRDVILENYHNLISVGYHGTKPDLIFKLEQGEDPWIINAKISRQSCPDGWEEWYQNNQDELESIERSYACSVLGRLNLSKTHDSSRQRLYNTRGKSLTQNSAPSRSYLRKNPDKFHGYEEPYFLKHQRAHSIEKNCVCSECGKAFRCKSQLIVHLRIHTGERPYECSKCERAFSAKSNLNAHQRVHTGEKPYSCSECEKVFSFRSQLIVHQEIHTGGKPYGCSECGKAYSWKSQLLLHQRSHTGVKPYECSECGKAFSLKSPFVVHQRTHTGVKPHKCSECGKAFRSKSYLLVHIRMHTGEKPYQCSDCGKAFNMKTQLIVHQGVHTGNNPYQCGECGKAFGRKEQLTAHLRAHAGEKPYGCSECGKAFSSKSYLVIHRRTHTGERPYECSLCERAFCGKSQLIIHQRTHSTEKPYECNECEKAYPRKASLQIHQKTHSGEKPFKCSECGKAFTQKSSLSEHQRVHTGEKPWKCSECGKSFCWNSGLRIHRKTHK.

The KRAB domain occupies 14–85 (LSFKDISMEF…NAKISRQSCP (72 aa)). C2H2-type zinc fingers lie at residues 174-196 (CVCSECGKAFRCKSQLIVHLRIH), 202-224 (YECSKCERAFSAKSNLNAHQRVH), 230-252 (YSCSECEKVFSFRSQLIVHQEIH), 258-280 (YGCSECGKAYSWKSQLLLHQRSH), 286-308 (YECSECGKAFSLKSPFVVHQRTH), 314-336 (HKCSECGKAFRSKSYLLVHIRMH), 342-364 (YQCSDCGKAFNMKTQLIVHQGVH), 370-392 (YQCGECGKAFGRKEQLTAHLRAH), 398-420 (YGCSECGKAFSSKSYLVIHRRTH), 426-448 (YECSLCERAFCGKSQLIIHQRTH), 454-476 (YECNECEKAYPRKASLQIHQKTH), 482-504 (FKCSECGKAFTQKSSLSEHQRVH), and 510-532 (WKCSECGKSFCWNSGLRIHRKTH).

Belongs to the krueppel C2H2-type zinc-finger protein family.

It is found in the nucleus. Its function is as follows. May be involved in transcriptional regulation. The polypeptide is Zinc finger protein 26 (ZNF26) (Homo sapiens (Human)).